The primary structure comprises 123 residues: MEAVIREGGSLPQVRSASRNQQRSGESTKGRKWEKQLRSEMRRWRRRKWPHLKPLAHPAISAEQLLAVIAPQPRPLLLLMWGVVCILPWRGWESSRARGVTHLGGRNSQGRSQGTRVWPLGRP.

2 disordered regions span residues 1-38 (MEAV…KQLR) and 100-123 (VTHL…LGRP). Residues 13–25 (QVRSASRNQQRSG) show a composition bias toward polar residues. The segment covering 26–38 (ESTKGRKWEKQLR) has biased composition (basic and acidic residues). Residues 106–115 (RNSQGRSQGT) show a composition bias toward polar residues.

The chain is Putative trans-acting factor (trans-acting factor) from Avian leukosis virus subgroup A (isolate RSA) (ALV-A RSA).